The following is a 100-amino-acid chain: Integration host factor subunit alpha (100 aa).

The interval 53 to 73 (FDLRDKRQRPGRNPKTGEEIP) is disordered.

It belongs to the bacterial histone-like protein family. As to quaternary structure, heterodimer of an alpha and a beta chain.

This protein is one of the two subunits of integration host factor, a specific DNA-binding protein that functions in genetic recombination as well as in transcriptional and translational control. The chain is Integration host factor subunit alpha from Pseudomonas aeruginosa (strain LESB58).